The chain runs to 284 residues: UPF0276 protein Ping_0944 (284 aa).

Belongs to the UPF0276 family.

The polypeptide is UPF0276 protein Ping_0944 (Psychromonas ingrahamii (strain DSM 17664 / CCUG 51855 / 37)).